A 106-amino-acid chain; its full sequence is Pyruvate decarboxylase 2 (106 aa).

Positions 10 and 12 each coordinate Mg(2+).

The protein belongs to the TPP enzyme family. In terms of assembly, homotetramer. Requires a metal cation as cofactor. It depends on thiamine diphosphate as a cofactor.

The catalysed reaction is a 2-oxocarboxylate + H(+) = an aldehyde + CO2. The chain is Pyruvate decarboxylase 2 (PDC2) from Zea mays (Maize).